The following is a 144-amino-acid chain: Small ribosomal subunit protein uS12 (144 aa).

Aspartate 103 bears the 3-methylthioaspartic acid mark. The segment at 125–144 (QQGRSRYGAKKGKAAPAKKK) is disordered. A compositionally biased stretch (basic residues) spans 131–144 (YGAKKGKAAPAKKK).

This sequence belongs to the universal ribosomal protein uS12 family. In terms of assembly, part of the 30S ribosomal subunit. Contacts proteins S8 and S17. May interact with IF1 in the 30S initiation complex.

Its function is as follows. With S4 and S5 plays an important role in translational accuracy. Functionally, interacts with and stabilizes bases of the 16S rRNA that are involved in tRNA selection in the A site and with the mRNA backbone. Located at the interface of the 30S and 50S subunits, it traverses the body of the 30S subunit contacting proteins on the other side and probably holding the rRNA structure together. The combined cluster of proteins S8, S12 and S17 appears to hold together the shoulder and platform of the 30S subunit. This Dehalococcoides mccartyi (strain ATCC BAA-2100 / JCM 16839 / KCTC 5957 / BAV1) protein is Small ribosomal subunit protein uS12.